A 48-amino-acid polypeptide reads, in one-letter code: Small, acid-soluble spore protein P (48 aa).

Positions 1 to 12 (MTNKNDSKDMRK) are enriched in basic and acidic residues. A disordered region spans residues 1-48 (MTNKNDSKDMRKNVSKGDNPGQPEPLDGSKKVKNRNHTRQKHNTSHDM). The span at 31–48 (KVKNRNHTRQKHNTSHDM) shows a compositional bias: basic residues.

The protein belongs to the SspP family.

Its subcellular location is the spore core. This is Small, acid-soluble spore protein P from Geobacillus thermodenitrificans (strain NG80-2).